A 90-amino-acid polypeptide reads, in one-letter code: Co-chaperonin GroES (90 aa).

Belongs to the GroES chaperonin family. Heptamer of 7 subunits arranged in a ring. Interacts with the chaperonin GroEL.

It is found in the cytoplasm. Functionally, together with the chaperonin GroEL, plays an essential role in assisting protein folding. The GroEL-GroES system forms a nano-cage that allows encapsulation of the non-native substrate proteins and provides a physical environment optimized to promote and accelerate protein folding. GroES binds to the apical surface of the GroEL ring, thereby capping the opening of the GroEL channel. The sequence is that of Co-chaperonin GroES from Phocaeicola vulgatus (strain ATCC 8482 / DSM 1447 / JCM 5826 / CCUG 4940 / NBRC 14291 / NCTC 11154) (Bacteroides vulgatus).